The following is a 137-amino-acid chain: Protein MGF 110-7L (137 aa).

Residues 1-20 (MLVIILGVIGLLASSNLVSS) form the signal peptide. N-linked (GlcNAc...) asparagine; by host glycans are attached at residues asparagine 69, asparagine 70, and asparagine 105.

It belongs to the asfaviruses V110 family.

The polypeptide is Protein MGF 110-7L (Ornithodoros (relapsing fever ticks)).